Consider the following 122-residue polypeptide: Fluoride-specific ion channel FluC 2 (122 aa).

The next 4 helical transmembrane spans lie at 3–23, 38–58, 62–82, and 93–113; these read ITAI…RMFI, TSIV…LNLT, LLLL…SFIY, and FMHL…CFYL. Residues Gly72 and Ser75 each contribute to the Na(+) site.

The protein belongs to the fluoride channel Fluc/FEX (TC 1.A.43) family.

The protein resides in the cell inner membrane. It catalyses the reaction fluoride(in) = fluoride(out). With respect to regulation, na(+) is not transported, but it plays an essential structural role and its presence is essential for fluoride channel function. Fluoride-specific ion channel. Important for reducing fluoride concentration in the cell, thus reducing its toxicity. The polypeptide is Fluoride-specific ion channel FluC 2 (Prochlorococcus marinus (strain MIT 9312)).